The primary structure comprises 446 residues: Coagulation factor VII (446 aa).

An N-terminal signal peptide occupies residues 1–24 (MVPQTHGLLLLYFLLQLQGPLGAV). A propeptide spanning residues 25-41 (VFITQEEAHGVLHRQRR) is cleaved from the precursor. Residues 42-86 (ANSLLEELWSSSLERECNEERCSFEEAREIFKSPERTKQFWTIYS) form the Gla domain. Glutamate 47, glutamate 48, glutamate 55, glutamate 57, glutamate 60, glutamate 61, glutamate 66, glutamate 67, glutamate 70, and glutamate 76 each carry 4-carboxyglutamate. An intrachain disulfide couples cysteine 58 to cysteine 63. An EGF-like 1; calcium-binding domain is found at 87 to 123 (DGDQCASNPCQNGGTCQDHLKSYVCFCPLDFEGRNCE). 10 disulfide bridges follow: cysteine 91-cysteine 102, cysteine 96-cysteine 111, cysteine 113-cysteine 122, cysteine 132-cysteine 143, cysteine 139-cysteine 153, cysteine 155-cysteine 168, cysteine 176-cysteine 303, cysteine 200-cysteine 205, cysteine 219-cysteine 235, and cysteine 351-cysteine 370. O-linked (Glc...) serine; alternate glycosylation is present at serine 93. O-linked (Xyl...) serine; alternate glycosylation occurs at serine 93. O-linked (Fuc) threonine glycosylation occurs at threonine 101. Position 104 is a (3R)-3-hydroxyaspartate (aspartate 104). In terms of domain architecture, EGF-like 2 spans 128–169 (EQLICANENGDCDQYCRDHVGTKRTCSCHEDYVLQPDEVSCK). N-linked (GlcNAc...) asparagine glycosylation occurs at asparagine 186. In terms of domain architecture, Peptidase S1 spans 194–433 (IVGGYVCPKG…YIDWLVKYMD (240 aa)). Histidine 234 (charge relay system) is an active-site residue. An N-linked (GlcNAc...) asparagine glycan is attached at asparagine 244. Aspartate 283 functions as the Charge relay system in the catalytic mechanism. Residue aspartate 379 participates in substrate binding. Cysteine 381 and cysteine 409 are joined by a disulfide. Serine 385 serves as the catalytic Charge relay system.

The protein belongs to the peptidase S1 family. Heterodimer of a light chain and a heavy chain linked by a disulfide bond. The vitamin K-dependent, enzymatic carboxylation of some glutamate residues allows the modified protein to bind calcium. Post-translationally, the iron and 2-oxoglutarate dependent 3-hydroxylation of aspartate and asparagine is (R) stereospecific within EGF domains. In terms of processing, can be either O-glucosylated or O-xylosylated at Ser-93 by POGLUT1. As to expression, plasma.

It localises to the secreted. It carries out the reaction Selective cleavage of Arg-|-Ile bond in factor X to form factor Xa.. Functionally, initiates the extrinsic pathway of blood coagulation. Serine protease that circulates in the blood in a zymogen form. Factor VII is converted to factor VIIa by factor Xa, factor XIIa, factor IXa, or thrombin by minor proteolysis. In the presence of tissue factor and calcium ions, factor VIIa then converts factor X to factor Xa by limited proteolysis. Factor VIIa also converts factor IX to factor IXa in the presence of tissue factor and calcium. The protein is Coagulation factor VII (F7) of Rattus norvegicus (Rat).